Consider the following 227-residue polypeptide: Thiamine-phosphate synthase (227 aa).

4-amino-2-methyl-5-(diphosphooxymethyl)pyrimidine-binding positions include 50-54 (QFRQK) and Asp-82. Positions 83 and 102 each coordinate Mg(2+). Thr-121 lines the 4-amino-2-methyl-5-(diphosphooxymethyl)pyrimidine pocket. Residue 147–149 (TTS) coordinates 2-[(2R,5Z)-2-carboxy-4-methylthiazol-5(2H)-ylidene]ethyl phosphate. Lys-150 is a binding site for 4-amino-2-methyl-5-(diphosphooxymethyl)pyrimidine. Residues Gly-178 and 198–199 (LS) each bind 2-[(2R,5Z)-2-carboxy-4-methylthiazol-5(2H)-ylidene]ethyl phosphate.

This sequence belongs to the thiamine-phosphate synthase family. The cofactor is Mg(2+).

It catalyses the reaction 2-[(2R,5Z)-2-carboxy-4-methylthiazol-5(2H)-ylidene]ethyl phosphate + 4-amino-2-methyl-5-(diphosphooxymethyl)pyrimidine + 2 H(+) = thiamine phosphate + CO2 + diphosphate. The catalysed reaction is 2-(2-carboxy-4-methylthiazol-5-yl)ethyl phosphate + 4-amino-2-methyl-5-(diphosphooxymethyl)pyrimidine + 2 H(+) = thiamine phosphate + CO2 + diphosphate. It carries out the reaction 4-methyl-5-(2-phosphooxyethyl)-thiazole + 4-amino-2-methyl-5-(diphosphooxymethyl)pyrimidine + H(+) = thiamine phosphate + diphosphate. It participates in cofactor biosynthesis; thiamine diphosphate biosynthesis; thiamine phosphate from 4-amino-2-methyl-5-diphosphomethylpyrimidine and 4-methyl-5-(2-phosphoethyl)-thiazole: step 1/1. In terms of biological role, condenses 4-methyl-5-(beta-hydroxyethyl)thiazole monophosphate (THZ-P) and 2-methyl-4-amino-5-hydroxymethyl pyrimidine pyrophosphate (HMP-PP) to form thiamine monophosphate (TMP). The chain is Thiamine-phosphate synthase from Salinibacter ruber (strain DSM 13855 / M31).